The following is a 271-amino-acid chain: Mediator of RNA polymerase II transcription subunit 18 (271 aa).

The segment at 89 to 119 (FGGNPSSSGDPDVSMSGLEEKPSSSSSSYSY) is disordered.

This sequence belongs to the Mediator complex subunit 18 family. Component of the Mediator complex.

The protein localises to the nucleus. Functionally, component of the Mediator complex, a coactivator involved in the regulated transcription of nearly all RNA polymerase II-dependent genes. Mediator functions as a bridge to convey information from gene-specific regulatory proteins to the basal RNA polymerase II transcription machinery. Mediator is recruited to promoters by direct interactions with regulatory proteins and serves as a scaffold for the assembly of a functional preinitiation complex with RNA polymerase II and the general transcription factors. In Aspergillus niger (strain ATCC MYA-4892 / CBS 513.88 / FGSC A1513), this protein is Mediator of RNA polymerase II transcription subunit 18 (srb5).